A 737-amino-acid chain; its full sequence is Catalase-peroxidase 2 (737 aa).

The disordered stretch occupies residues Met1–Gly33. The tryptophyl-tyrosyl-methioninium (Trp-Tyr) (with M-261) cross-link spans Trp107–Tyr235. His108 functions as the Proton acceptor in the catalytic mechanism. The tryptophyl-tyrosyl-methioninium (Tyr-Met) (with W-107) cross-link spans Tyr235–Met261. His276 contacts heme.

Belongs to the peroxidase family. Peroxidase/catalase subfamily. As to quaternary structure, homodimer or homotetramer. Heme b serves as cofactor. Post-translationally, formation of the three residue Trp-Tyr-Met cross-link is important for the catalase, but not the peroxidase activity of the enzyme.

The catalysed reaction is H2O2 + AH2 = A + 2 H2O. It carries out the reaction 2 H2O2 = O2 + 2 H2O. Functionally, bifunctional enzyme with both catalase and broad-spectrum peroxidase activity. The chain is Catalase-peroxidase 2 from Mycolicibacterium vanbaalenii (strain DSM 7251 / JCM 13017 / BCRC 16820 / KCTC 9966 / NRRL B-24157 / PYR-1) (Mycobacterium vanbaalenii).